Reading from the N-terminus, the 185-residue chain is HTH-type transcriptional regulator Hpr (185 aa).

The HTH marR-type domain maps to 13–157 (AMIFSQRIAQ…LIAILRNIYG (145 aa)). The segment at residues 63-86 (ISEIAKFGVMHVSTAFNFSKKLEE) is a DNA-binding region (H-T-H motif).

As to quaternary structure, homodimer.

In terms of biological role, negative regulator of protease production and sporulation. The sequence is that of HTH-type transcriptional regulator Hpr from Bacillus anthracis (strain CDC 684 / NRRL 3495).